Consider the following 218-residue polypeptide: ATP phosphoribosyltransferase (218 aa).

The protein belongs to the ATP phosphoribosyltransferase family. Short subfamily. Heteromultimer composed of HisG and HisZ subunits.

The protein localises to the cytoplasm. The catalysed reaction is 1-(5-phospho-beta-D-ribosyl)-ATP + diphosphate = 5-phospho-alpha-D-ribose 1-diphosphate + ATP. It participates in amino-acid biosynthesis; L-histidine biosynthesis; L-histidine from 5-phospho-alpha-D-ribose 1-diphosphate: step 1/9. Catalyzes the condensation of ATP and 5-phosphoribose 1-diphosphate to form N'-(5'-phosphoribosyl)-ATP (PR-ATP). Has a crucial role in the pathway because the rate of histidine biosynthesis seems to be controlled primarily by regulation of HisG enzymatic activity. The chain is ATP phosphoribosyltransferase from Lactiplantibacillus plantarum (strain ATCC BAA-793 / NCIMB 8826 / WCFS1) (Lactobacillus plantarum).